We begin with the raw amino-acid sequence, 268 residues long: uncharacterized protein (268 aa).

The RING-type; degenerate zinc-finger motif lies at 21 to 61 (CVICLQKDGLRAQLSPCGHDQFDYSCICRWMDQSLTCPICK).

The protein resides in the mitochondrion. Its subcellular location is the nucleus. This is an uncharacterized protein from Schizosaccharomyces pombe (strain 972 / ATCC 24843) (Fission yeast).